The sequence spans 886 residues: Alanine--tRNA ligase (886 aa).

Positions 564, 568, 666, and 670 each coordinate Zn(2+).

Belongs to the class-II aminoacyl-tRNA synthetase family. Requires Zn(2+) as cofactor.

The protein localises to the cytoplasm. The catalysed reaction is tRNA(Ala) + L-alanine + ATP = L-alanyl-tRNA(Ala) + AMP + diphosphate. Functionally, catalyzes the attachment of alanine to tRNA(Ala) in a two-step reaction: alanine is first activated by ATP to form Ala-AMP and then transferred to the acceptor end of tRNA(Ala). Also edits incorrectly charged Ser-tRNA(Ala) and Gly-tRNA(Ala) via its editing domain. The chain is Alanine--tRNA ligase from Prochlorococcus marinus (strain MIT 9515).